Consider the following 458-residue polypeptide: Argininosuccinate lyase (458 aa).

This sequence belongs to the lyase 1 family. Argininosuccinate lyase subfamily.

Its subcellular location is the cytoplasm. The catalysed reaction is 2-(N(omega)-L-arginino)succinate = fumarate + L-arginine. It participates in amino-acid biosynthesis; L-arginine biosynthesis; L-arginine from L-ornithine and carbamoyl phosphate: step 3/3. The polypeptide is Argininosuccinate lyase (Neisseria meningitidis serogroup C (strain 053442)).